The following is a 115-amino-acid chain: Large ribosomal subunit protein bL19 (115 aa).

Belongs to the bacterial ribosomal protein bL19 family.

Its function is as follows. This protein is located at the 30S-50S ribosomal subunit interface and may play a role in the structure and function of the aminoacyl-tRNA binding site. This is Large ribosomal subunit protein bL19 from Erwinia tasmaniensis (strain DSM 17950 / CFBP 7177 / CIP 109463 / NCPPB 4357 / Et1/99).